The primary structure comprises 337 residues: MIQQAIAKLLEGEDLTRAEAALVMTEIADGGATPAQSGAFLAALRMKGETVDEIAGAADVMRQRADRVRVDRDVFIDTCGTGGDGRHTFNISTTAAFVAAGAGVCVAKHGNRAVSSRSGSADVLAALGVNVDADKETVERCIEEVGIGFLFAVRLHPAFKAIAGVRRELGVRTIFNLLGPLANPAGARHQVLGVYEARWVPVLGGVLAALGAAHAFVVHGEGLDEIAVTGMTHVCEVRDGQVERYTIRPEDLGLPRRDAAELVGGDAVANARIVTDVLEGQAGGPRDAVLANAAAALVCAGAAKDLRDGVARAARSIDSGAAREKLRQLVAATTVPA.

5-phospho-alpha-D-ribose 1-diphosphate contacts are provided by residues Gly80, Gly83–Asp84, Thr88, Asn90–Thr93, Lys108–Ser116, and Ser120. Gly80 contacts anthranilate. Mg(2+) is bound at residue Ser92. Asn111 is a binding site for anthranilate. Arg166 contacts anthranilate. Asp224 and Glu225 together coordinate Mg(2+).

This sequence belongs to the anthranilate phosphoribosyltransferase family. In terms of assembly, homodimer. The cofactor is Mg(2+).

It carries out the reaction N-(5-phospho-beta-D-ribosyl)anthranilate + diphosphate = 5-phospho-alpha-D-ribose 1-diphosphate + anthranilate. The protein operates within amino-acid biosynthesis; L-tryptophan biosynthesis; L-tryptophan from chorismate: step 2/5. In terms of biological role, catalyzes the transfer of the phosphoribosyl group of 5-phosphorylribose-1-pyrophosphate (PRPP) to anthranilate to yield N-(5'-phosphoribosyl)-anthranilate (PRA). The polypeptide is Anthranilate phosphoribosyltransferase (Anaeromyxobacter dehalogenans (strain 2CP-1 / ATCC BAA-258)).